We begin with the raw amino-acid sequence, 249 residues long: Triosephosphate isomerase (249 aa).

9-11 (NWK) is a substrate binding site. Residue H95 is the Electrophile of the active site. The Proton acceptor role is filled by E167. Residues G173, S213, and 234–235 (GG) each bind substrate.

Belongs to the triosephosphate isomerase family. As to quaternary structure, homodimer.

It is found in the cytoplasm. The catalysed reaction is D-glyceraldehyde 3-phosphate = dihydroxyacetone phosphate. It functions in the pathway carbohydrate biosynthesis; gluconeogenesis. The protein operates within carbohydrate degradation; glycolysis; D-glyceraldehyde 3-phosphate from glycerone phosphate: step 1/1. Involved in the gluconeogenesis. Catalyzes stereospecifically the conversion of dihydroxyacetone phosphate (DHAP) to D-glyceraldehyde-3-phosphate (G3P). The sequence is that of Triosephosphate isomerase from Solibacter usitatus (strain Ellin6076).